The sequence spans 401 residues: 8-amino-7-oxononanoate synthase (401 aa).

Arg-24 serves as a coordination point for substrate. 111–112 serves as a coordination point for pyridoxal 5'-phosphate; sequence GF. His-137 contributes to the substrate binding site. Residues Ser-183, His-211, and Thr-240 each contribute to the pyridoxal 5'-phosphate site. Lys-243 carries the post-translational modification N6-(pyridoxal phosphate)lysine. Thr-357 serves as a coordination point for substrate.

It belongs to the class-II pyridoxal-phosphate-dependent aminotransferase family. BioF subfamily. Homodimer. The cofactor is pyridoxal 5'-phosphate.

It catalyses the reaction 6-carboxyhexanoyl-[ACP] + L-alanine + H(+) = (8S)-8-amino-7-oxononanoate + holo-[ACP] + CO2. It functions in the pathway cofactor biosynthesis; biotin biosynthesis. In terms of biological role, catalyzes the decarboxylative condensation of pimeloyl-[acyl-carrier protein] and L-alanine to produce 8-amino-7-oxononanoate (AON), [acyl-carrier protein], and carbon dioxide. This chain is 8-amino-7-oxononanoate synthase, found in Xylella fastidiosa (strain M12).